We begin with the raw amino-acid sequence, 136 residues long: Protein K5 (136 aa).

The protein belongs to the poxviridae K5 protein family.

This chain is Protein K5, found in Homo sapiens (Human).